We begin with the raw amino-acid sequence, 225 residues long: UPF0758 protein Spea_3837 (225 aa).

The MPN domain occupies 102–224; the sequence is ILSDPDLTRD…IVSFAERGWI (123 aa). Zn(2+) is bound by residues H173, H175, and D186. The JAMM motif motif lies at 173-186; it reads HNHPSGIAEPSTAD.

This sequence belongs to the UPF0758 family.

This is UPF0758 protein Spea_3837 from Shewanella pealeana (strain ATCC 700345 / ANG-SQ1).